A 137-amino-acid chain; its full sequence is Large-conductance mechanosensitive channel (137 aa).

A run of 2 helical transmembrane segments spans residues 10-30 (FAMR…AAFG) and 76-96 (GVFL…FMAI).

The protein belongs to the MscL family. Homopentamer.

It localises to the cell inner membrane. In terms of biological role, channel that opens in response to stretch forces in the membrane lipid bilayer. May participate in the regulation of osmotic pressure changes within the cell. In Erwinia tasmaniensis (strain DSM 17950 / CFBP 7177 / CIP 109463 / NCPPB 4357 / Et1/99), this protein is Large-conductance mechanosensitive channel.